We begin with the raw amino-acid sequence, 323 residues long: Ribonuclease Z (323 aa).

Zn(2+) contacts are provided by His62, His64, Asp66, His67, His144, Asp215, and His273. Catalysis depends on Asp66, which acts as the Proton acceptor.

This sequence belongs to the RNase Z family. Homodimer. The cofactor is Zn(2+).

It catalyses the reaction Endonucleolytic cleavage of RNA, removing extra 3' nucleotides from tRNA precursor, generating 3' termini of tRNAs. A 3'-hydroxy group is left at the tRNA terminus and a 5'-phosphoryl group is left at the trailer molecule.. Zinc phosphodiesterase, which displays some tRNA 3'-processing endonuclease activity. Probably involved in tRNA maturation, by removing a 3'-trailer from precursor tRNA. The chain is Ribonuclease Z from Synechococcus sp. (strain WH7803).